The sequence spans 172 residues: MAKFQAKSQNDAPDDGLKEKMIAVNRVTKVVKGGRILGFAALTVVGDGDGRVGMGKGKSKEVPAAVQKAMEEARRNMTKVSLKNGTIHHNVFGHWGAANVMMAPAPKGTGIIAGGPMRAVFEVMGITDIVAKSHGSSNPYNMVRATMDALNNSTTASEIAAKRGKSVEEIFG.

Residues 17 to 80 (LKEKMIAVNR…EEARRNMTKV (64 aa)) enclose the S5 DRBM domain.

It belongs to the universal ribosomal protein uS5 family. As to quaternary structure, part of the 30S ribosomal subunit. Contacts proteins S4 and S8.

With S4 and S12 plays an important role in translational accuracy. Functionally, located at the back of the 30S subunit body where it stabilizes the conformation of the head with respect to the body. The polypeptide is Small ribosomal subunit protein uS5 (Polaromonas sp. (strain JS666 / ATCC BAA-500)).